Reading from the N-terminus, the 281-residue chain is Inositol diphosphatase SIW14 (281 aa).

A disordered region spans residues 1 to 20 (MGLYQAKNDEGSDPKSSSKI). Residues 7 to 20 (KNDEGSDPKSSSKI) show a composition bias toward basic and acidic residues. S94 is subject to Phosphoserine. The 151-residue stretch at 121–271 (NFSHVVGEIY…YDDDEIKRIA (151 aa)) folds into the Tyrosine-protein phosphatase domain. 3 residues coordinate 1D-myo-inositol hexakisphosphate: N189, I190, and H193. C214 serves as the catalytic Phosphocysteine intermediate.

This sequence belongs to the protein-tyrosine phosphatase family. Atypical dual-specificity phosphatase Siw14-like subfamily. In terms of assembly, monomer.

The protein resides in the cytoplasm. It carries out the reaction 5-diphospho-1D-myo-inositol 1,2,3,4,6-pentakisphosphate + H2O = 1D-myo-inositol hexakisphosphate + phosphate + H(+). The enzyme catalyses 5-diphospho-1D-myo-inositol 1,3,4,6-tetrakisphosphate + H2O = 1D-myo-inositol 1,3,4,5,6-pentakisphosphate + phosphate + H(+). The catalysed reaction is 3,5-bis(diphospho)-1D-myo-inositol 1,2,4,6-tetrakisphosphate + H2O = 3-diphospho-1D-myo-inositol 1,2,4,5,6-pentakisphosphate + phosphate + 2 H(+). It catalyses the reaction 1,5-bis(diphospho)-1D-myo-inositol 2,3,4,6-tetrakisphosphate + H2O = 1-diphospho-1D-myo-inositol 2,3,4,5,6-pentakisphosphate + phosphate + 2 H(+). It carries out the reaction 6-diphospho-1D-myo-inositol pentakisphosphate + H2O = 1D-myo-inositol hexakisphosphate + phosphate + H(+). In terms of biological role, selectively cleaves the beta-phosphate at the 5-position of soluble inositol pyrophosphates. Converts 5-diphosphoinositol tetrakisphosphate (5-PP-InsP(4)) into inositol pentakisphosphate (InsP(5)), 5-diphosphoinositol pentakisphosphate (5-PP-IP(5) or 5-InsP(7)) into inositol hexakisphosphate (IP(6) or InsP(6)), and 1,5-bisdiphosphoinositol tetrakisphosphate (1,5-PP-IP(5) or InsP(8)) into 1-diphosphoinositol pentakisphosphate (1-PP-IP(5) or 1-InsP(7)). Also has activity on 1,5-bis-diphosphoinositol 2,3,4,6-tetrakisphosphate (1,5-InsP(8)) and 3,5-InsP(8). Modulates inositol pyrophosphate metabolism that may have an influence in stress response. Plays a role in actin filament organization and endocytosis. Functions as a prion suppressing factor possibly due to its phosphatase activity against inositol pyrophosphates, which are signal transduction molecules involved in prion propagation. This Saccharomyces cerevisiae (strain ATCC 204508 / S288c) (Baker's yeast) protein is Inositol diphosphatase SIW14 (SIW14).